Consider the following 218-residue polypeptide: Large ribosomal subunit protein uL3 (218 aa).

2 disordered regions span residues 128-167 (FSRG…RMGG) and 199-218 (SLLN…QGGK).

Belongs to the universal ribosomal protein uL3 family. As to quaternary structure, part of the 50S ribosomal subunit. Forms a cluster with proteins L14 and L19.

Its function is as follows. One of the primary rRNA binding proteins, it binds directly near the 3'-end of the 23S rRNA, where it nucleates assembly of the 50S subunit. This is Large ribosomal subunit protein uL3 from Prochlorococcus marinus (strain NATL2A).